We begin with the raw amino-acid sequence, 141 residues long: Hemoglobin subunit alpha (141 aa).

The 141-residue stretch at 1–141 (VLSPTDKTNV…VSTVLTSKYR (141 aa)) folds into the Globin domain. Position 3 is a phosphoserine (S3). K7 carries the post-translational modification N6-succinyllysine. T8 bears the Phosphothreonine mark. K11 is modified (N6-succinyllysine). Position 24 is a phosphotyrosine (Y24). S35 is modified (phosphoserine). N6-succinyllysine is present on K40. A Phosphoserine modification is found at S49. H58 contributes to the O2 binding site. H87 is a binding site for heme b. S102 carries the phosphoserine modification. A Phosphothreonine modification is found at T108. Phosphoserine is present on S124. T134 and T137 each carry phosphothreonine. A Phosphoserine modification is found at S138.

The protein belongs to the globin family. As to quaternary structure, heterotetramer of two alpha chains and two beta chains. In terms of tissue distribution, red blood cells.

In terms of biological role, involved in oxygen transport from the lung to the various peripheral tissues. Hemopressin acts as an antagonist peptide of the cannabinoid receptor CNR1. Hemopressin-binding efficiently blocks cannabinoid receptor CNR1 and subsequent signaling. This chain is Hemoglobin subunit alpha (HBA), found in Rhinoceros unicornis (Greater Indian rhinoceros).